Here is a 137-residue protein sequence, read N- to C-terminus: Nucleoside diphosphate kinase (137 aa).

The ATP site is built by Lys-9, Phe-57, Arg-85, Thr-91, Arg-102, and Asn-112. His-115 functions as the Pros-phosphohistidine intermediate in the catalytic mechanism.

It belongs to the NDK family. In terms of assembly, homotetramer. The cofactor is Mg(2+).

It localises to the cytoplasm. The catalysed reaction is a 2'-deoxyribonucleoside 5'-diphosphate + ATP = a 2'-deoxyribonucleoside 5'-triphosphate + ADP. It catalyses the reaction a ribonucleoside 5'-diphosphate + ATP = a ribonucleoside 5'-triphosphate + ADP. Its function is as follows. Major role in the synthesis of nucleoside triphosphates other than ATP. The ATP gamma phosphate is transferred to the NDP beta phosphate via a ping-pong mechanism, using a phosphorylated active-site intermediate. This is Nucleoside diphosphate kinase from Campylobacter jejuni subsp. jejuni serotype O:6 (strain 81116 / NCTC 11828).